The sequence spans 154 residues: RxLR effector protein PITG_12737 (154 aa).

The first 16 residues, 1–16 (MRVYFILILAVATVSG), serve as a signal peptide directing secretion. The RxLR-dEER signature appears at 42–58 (RLLRAELTTDETYPEER).

This sequence belongs to the RxLR effector family.

It is found in the secreted. The protein localises to the host nucleus. It localises to the host cytoplasm. Effector that enhances P.infestans colonization of Nicotiana benthamiana leaves. This is RxLR effector protein PITG_12737 from Phytophthora infestans (strain T30-4) (Potato late blight agent).